Reading from the N-terminus, the 47-residue chain is Defensin-like protein 1 (47 aa).

Cystine bridges form between cysteine 3–cysteine 47, cysteine 14–cysteine 36, cysteine 20–cysteine 41, and cysteine 24–cysteine 43.

The protein belongs to the DEFL family. Protease inhibitor I18 (RTI/MTI-2) subfamily.

This chain is Defensin-like protein 1, found in Sorghum bicolor (Sorghum).